The chain runs to 126 residues: NADP-reducing hydrogenase subunit HndB (126 aa).

In terms of assembly, heterotetramer composed of HndA, HndB, HndC and HndD subunits. HndA and HndB could form a heterodimeric intermediate in the electron transfer between the active site of hydrogenase subunit HndD and the NADP reduction site of the reducing subunit HndC.

It carries out the reaction H2 + NADP(+) = NADPH + H(+). Inhibited by oxygen. In terms of biological role, catalyzes the reduction of NADP in the presence of molecular H2 to yield NADPH. The protein is NADP-reducing hydrogenase subunit HndB (hndB) of Solidesulfovibrio fructosivorans (Desulfovibrio fructosivorans).